Consider the following 2171-residue polypeptide: ATP-binding cassette sub-family C member Sur (2171 aa).

Over 1 to 36 the chain is Extracellular; the sequence is MKQLFNIIHCDHLNGHVRSIYDNLNTDICGIDRVRR. The chain crosses the membrane as a helical span at residues 37 to 57; sequence VFTFFSIFLLLFGLMFVCSRY. At 58-71 the chain is on the cytoplasmic side; that stretch reads KKCHKTLLTFHNGR. Residues 72–92 traverse the membrane as a helical segment; that stretch reads AAISLLLLALNSFDLARIFLP. Residues 93 to 112 lie on the Extracellular side of the membrane; that stretch reads HQNVRNLNRLFQSSPRDLNY. Residues 113-133 form a helical membrane-spanning segment; that stretch reads LVVIGSGELWNALFSTLLTLM. Residues 134-145 lie on the Cytoplasmic side of the membrane; the sequence is LMLYHRMVERKK. Residues 146–166 traverse the membrane as a helical segment; that stretch reads ATVFLYASTAVEALTFALLSN. Residues 167–182 lie on the Extracellular side of the membrane; that stretch reads ELFELVRYEDFLELQT. The chain crosses the membrane as a helical span at residues 183–203; that stretch reads CLVAMSAMCMVSLAMLDGLTV. Residues 204-224 lie on the Cytoplasmic side of the membrane; sequence YKECYHDDYLDDYGKIGYKHS. The helical transmembrane segment at 225 to 245 threads the bilayer; sequence MATFYSKSCFWWLTPLLWLGY. Topologically, residues 246–299 are extracellular; sequence KEPLELEDLGQMKLEDSARSHYDHFLYIYTEKKKKSNSSPSLWYCYIKNSWQMF. The chain crosses the membrane as a helical span at residues 300–320; it reads ALGGILKLAGDLFALIGPLAI. The Cytoplasmic portion of the chain corresponds to 321–447; that stretch reads QKIVEYIEQL…MTEDTRNIME (127 aa). The ABC transmembrane type-1 1 domain occupies 344–622; that stretch reads NEVANVLLST…FPITVPIIIA (279 aa). The disordered stretch occupies residues 388-434; sequence DSSDSAGQVQSTSSTSDEKQKNDDSMATPEHVDNPSEPNISHDIGSI. Positions 389 to 402 are enriched in polar residues; that stretch reads SSDSAGQVQSTSST. Basic and acidic residues predominate over residues 403–421; the sequence is SDEKQKNDDSMATPEHVDN. Residues 448 to 468 traverse the membrane as a helical segment; that stretch reads FFLIIHYAWAIPFKIAVVIYL. The Extracellular portion of the chain corresponds to 469-474; that stretch reads LYMNLG. Residues 475 to 495 traverse the membrane as a helical segment; that stretch reads ISAVIGSIACIVIMTPLQFFI. The Cytoplasmic segment spans residues 496–562; the sequence is GNAMSKNAEV…KDATFWTLMA (67 aa). A helical membrane pass occupies residues 563 to 583; that stretch reads VLTHIATVLITFVTLGVYVWL. Residues 584–600 lie on the Extracellular side of the membrane; sequence HRDQEFDLNASRLFSSL. The helical transmembrane segment at 601-621 threads the bilayer; the sequence is ALFQQLTVPLLIFPITVPIII. The Cytoplasmic segment spans residues 622-1409; sequence AARVSTRRLE…KYGKISDDIY (788 aa). Residues 785–1014 form the ABC transporter 1 domain; it reads VSINDGLFTW…QPRITAEWNA (230 aa). An ATP-binding site is contributed by 822–829; that stretch reads GKNGSGKT. Residues 1141–1151 show a composition bias toward basic residues; that stretch reads RRRHTLGRRGS. 2 disordered regions span residues 1141–1177 and 1209–1265; these read RRRH…SISG and PRVQ…DHVR. Low complexity predominate over residues 1160 to 1176; that stretch reads LSGLSTLTATSESSSIS. The segment covering 1212–1232 has biased composition (polar residues); the sequence is QSWQPPQHVTHHQPLSRNASS. Residues 1242-1251 show a composition bias toward basic and acidic residues; it reads DVKKSEEARR. A helical transmembrane segment spans residues 1410–1430; that stretch reads LMYIRAAGLPIITIFFITALI. In terms of domain architecture, ABC transmembrane type-1 2 spans 1421–1715; that stretch reads ITIFFITALI…AVTKSPSELR (295 aa). Residues 1431–1468 lie on the Extracellular side of the membrane; sequence WQCLRVYTDIWLQQWSNVHGRVASKGHVVLHPSEQDHE. The chain crosses the membrane as a helical span at residues 1469–1489; sequence VTYYFRMYAAISCVCIIMALV. Residues 1490–1558 are Cytoplasmic-facing; it reads STPAGQYAGC…QRLLQFTLLC (69 aa). The helical transmembrane segment at 1559–1579 threads the bilayer; it reads LSAILINVTITPWILVLTLPI. Topologically, residues 1580 to 1655 are extracellular; sequence CGAYYLIQKF…YALLNTSHRW (76 aa). Residues 1656–1676 form a helical membrane-spanning segment; the sequence is LGVSLDYLGGCIVFVATVTAL. Over 1677-1718 the chain is Cytoplasmic; sequence TAASVSCRRHYEATTSPSASASPSPFETYAVTKSPSELRPSP. A helical membrane pass occupies residues 1719-1739; sequence SLVGLAINYTLLVPIYLNWVV. Over 1740 to 2171 the chain is Extracellular; it reads KLLADMEMYA…GLLEKGASKW (432 aa). Positions 1766–1778 are enriched in acidic residues; that stretch reads ADADADADADVDA. 2 disordered regions span residues 1766 to 1844 and 1866 to 1902; these read ADAD…GHEN and NFHH…DKDK. Composition is skewed to basic and acidic residues over residues 1793–1804 and 1887–1902; these read EVDRSSQSDAGD and VIKD…DKDK. Residues 1930–2165 form the ABC transporter 2 domain; the sequence is IHFDNVSLRY…EGSVFRGLLE (236 aa). 1964-1971 contacts ATP; sequence GRTGSGKS.

The protein belongs to the ABC transporter superfamily. ABCC family. Conjugate transporter (TC 3.A.1.208) subfamily. As to expression, highly expressed in adult heart. Detected at lower levels in head and abdomen.

The protein resides in the membrane. Its function is as follows. May function as regulatory subunit of ATP-sensitive potassium channels (KATP) and form KATP channels with a member of the ATP-sensitive inward rectifier potassium channel family. May also have channel activity by itself (in vitro). May protect the heart during hypoxia. May protect against heart failure under conditions of tachycardic stress. This Drosophila melanogaster (Fruit fly) protein is ATP-binding cassette sub-family C member Sur (Sur).